A 488-amino-acid polypeptide reads, in one-letter code: Protein nucleotidyltransferase YdiU (488 aa).

Glycine 91, glycine 93, arginine 94, lysine 114, aspartate 126, glycine 127, arginine 177, and arginine 184 together coordinate ATP. The active-site Proton acceptor is aspartate 253. Mg(2+) contacts are provided by asparagine 254 and aspartate 263. Aspartate 263 is an ATP binding site.

Belongs to the SELO family. It depends on Mg(2+) as a cofactor. Requires Mn(2+) as cofactor.

It carries out the reaction L-seryl-[protein] + ATP = 3-O-(5'-adenylyl)-L-seryl-[protein] + diphosphate. The catalysed reaction is L-threonyl-[protein] + ATP = 3-O-(5'-adenylyl)-L-threonyl-[protein] + diphosphate. It catalyses the reaction L-tyrosyl-[protein] + ATP = O-(5'-adenylyl)-L-tyrosyl-[protein] + diphosphate. The enzyme catalyses L-histidyl-[protein] + UTP = N(tele)-(5'-uridylyl)-L-histidyl-[protein] + diphosphate. It carries out the reaction L-seryl-[protein] + UTP = O-(5'-uridylyl)-L-seryl-[protein] + diphosphate. The catalysed reaction is L-tyrosyl-[protein] + UTP = O-(5'-uridylyl)-L-tyrosyl-[protein] + diphosphate. Functionally, nucleotidyltransferase involved in the post-translational modification of proteins. It can catalyze the addition of adenosine monophosphate (AMP) or uridine monophosphate (UMP) to a protein, resulting in modifications known as AMPylation and UMPylation. This Bacillus cereus (strain ATCC 10987 / NRS 248) protein is Protein nucleotidyltransferase YdiU.